The primary structure comprises 132 residues: Histone H2B.9 (132 aa).

The segment covering 1-11 has biased composition (basic and acidic residues); sequence MAPKAEKKPAE. The disordered stretch occupies residues 1 to 41; it reads MAPKAEKKPAEKAPAPKAEKKIAKEGGTSEIVKKKKKTKKS. Residue Ala-2 is modified to N,N,N-trimethylalanine; alternate. Ala-2 carries the post-translational modification N,N-dimethylalanine; alternate. Residue Ala-2 is modified to N-methylalanine; alternate. Lys-4 is modified (N6-methyllysine). N6-acetyllysine is present on residues Lys-7, Lys-12, Lys-20, and Lys-21. A Glycyl lysine isopeptide (Lys-Gly) (interchain with G-Cter in ubiquitin) cross-link involves residue Lys-128.

Belongs to the histone H2B family. The nucleosome is a histone octamer containing two molecules each of H2A, H2B, H3 and H4 assembled in one H3-H4 heterotetramer and two H2A-H2B heterodimers. The octamer wraps approximately 147 bp of DNA. Can be acetylated to form H2BK6ac, H2BK33ac and H2BK34ac. Post-translationally, monoubiquitinated by BRE1 to form H2BK143ub1 and deubiquitinated by UBP26. Required for heterochromatic histone H3 di- and trimethylation at H3K4me. May give a specific tag for epigenetic transcriptional activation.

The protein localises to the nucleus. It is found in the chromosome. Functionally, core component of nucleosome. Nucleosomes wrap and compact DNA into chromatin, limiting DNA accessibility to the cellular machineries which require DNA as a template. Histones thereby play a central role in transcription regulation, DNA repair, DNA replication and chromosomal stability. DNA accessibility is regulated via a complex set of post-translational modifications of histones, also called histone code, and nucleosome remodeling. In Arabidopsis thaliana (Mouse-ear cress), this protein is Histone H2B.9.